Here is a 355-residue protein sequence, read N- to C-terminus: MVKYVVTGGCGFLGSHIVKCILKYAPEVTEVVAYDINISHIMTMWSSKLKVVRGDVMDVMALAKAVDGADVVIHTAGIVDVWYRHTDDEIYRVNVSGTKNVLMCCINAGVQVLVNTSSMEVVGPNTTSGVFVRGGERTPYNTVHDHVYPLSKDRAEKLVKHYTGVAAAPGMPALKTCSLRPTGIYGEGCDLLEKFFHDTVNAGNVAYGGSPPDSEHGRVYVGNVAWMHLLAARALLAGGESAHKVNGEAFFCYDDSPYMSYDAFNAELFEDRGFGYVYVPYWVMKPMAAYNDLKRKFLGCFGVKRSPILNSYTLALARTSFTVKTSKARRMFGYMPLYEWSEAKRRTKDWISTLK.

Belongs to the 3-beta-HSD family.

This is an uncharacterized protein from Frog virus 3 (isolate Goorha) (FV-3).